A 241-amino-acid chain; its full sequence is Mitochondrial inner membrane protease ATP23 (241 aa).

Histidine 141 provides a ligand contact to a divalent metal cation. Glutamate 142 is a catalytic residue. Histidine 145 is an a divalent metal cation binding site.

This sequence belongs to the peptidase M76 family.

It is found in the mitochondrion inner membrane. Functionally, has a dual role in the assembly of mitochondrial ATPase. Acts as a protease that removes N-terminal residues of mitochondrial ATPase CF(0) subunit 6 at the intermembrane space side. Also involved in the correct assembly of the membrane-embedded ATPase CF(0) particle, probably mediating association of subunit 6 with the subunit 9 ring. This Lodderomyces elongisporus (strain ATCC 11503 / CBS 2605 / JCM 1781 / NBRC 1676 / NRRL YB-4239) (Yeast) protein is Mitochondrial inner membrane protease ATP23 (ATP23).